The following is a 350-amino-acid chain: tRNA uridine(34) hydroxylase (350 aa).

Residues Asp146–Leu240 enclose the Rhodanese domain. Cys200 functions as the Cysteine persulfide intermediate in the catalytic mechanism.

The protein belongs to the TrhO family.

It carries out the reaction uridine(34) in tRNA + AH2 + O2 = 5-hydroxyuridine(34) in tRNA + A + H2O. Functionally, catalyzes oxygen-dependent 5-hydroxyuridine (ho5U) modification at position 34 in tRNAs. The chain is tRNA uridine(34) hydroxylase from Erwinia tasmaniensis (strain DSM 17950 / CFBP 7177 / CIP 109463 / NCPPB 4357 / Et1/99).